Here is a 214-residue protein sequence, read N- to C-terminus: Probable nicotinate-nucleotide adenylyltransferase (214 aa).

It belongs to the NadD family.

The enzyme catalyses nicotinate beta-D-ribonucleotide + ATP + H(+) = deamido-NAD(+) + diphosphate. The protein operates within cofactor biosynthesis; NAD(+) biosynthesis; deamido-NAD(+) from nicotinate D-ribonucleotide: step 1/1. Functionally, catalyzes the reversible adenylation of nicotinate mononucleotide (NaMN) to nicotinic acid adenine dinucleotide (NaAD). The sequence is that of Probable nicotinate-nucleotide adenylyltransferase from Rubrobacter xylanophilus (strain DSM 9941 / JCM 11954 / NBRC 16129 / PRD-1).